Here is a 411-residue protein sequence, read N- to C-terminus: Protrudin (411 aa).

The interval 1–27 (MQTSEREGSGPELSPSVMPEAPLESPP) is disordered. Residues 1 to 66 (MQTSEREGSG…AGDGVRYLLR (66 aa)) lie on the Cytoplasmic side of the membrane. The segment at 1-92 (MQTSEREGSG…LFLTLNEGAW (92 aa)) is sufficient for homooligomerization. Residues 1-205 (MQTSEREGSG…LYLLPLCWVL (205 aa)) form a sufficient for localization to endoplasmic reticulum tubular network and for interactions with REEP1, REEP5, ATL1, ATL2, ATL3 and SPAST region. The tract at residues 51–64 (LEPLKDAGDGVRYL) is necessary for interaction with RAB11A and function in neurite outgrowth. A helical membrane pass occupies residues 67 to 87 (WQMPLCSLLTCLGLNVLFLTL). Residue Asn-88 is a topological domain, lumenal. Residues 89–109 (EGAWYSVGALMISVPALLGYL) traverse the membrane as a helical segment. The Cytoplasmic segment spans residues 110-187 (QEVCRARLPD…NPVVSSQFYG (78 aa)). The segment at residues 188-208 (ALLGTVCMLYLLPLCWVLTLL) is an intramembrane region (helical). Over 209-411 (NSTLFLGNVE…CASCNQTLSK (203 aa)) the chain is Cytoplasmic. Residues 234–286 (MNPKQEEHAFESPPPPDVGGKDGLMDSTPALTPTEDLTPGSVEEAEEAEPDEE) form a disordered region. The tract at residues 271–361 (TPGSVEEAEE…GCSATFSVLK (91 aa)) is necessary for interaction with KIF5A. A compositionally biased stretch (acidic residues) spans 276–286 (EEAEEAEPDEE). Residues 286 to 292 (EFKDAIE) are necessary for interaction with VAPA and function in cell projections formation. The segment at 344 to 410 (TNNFGNCTGC…VCASCNQTLS (67 aa)) adopts an FYVE-type zinc-finger fold. 8 residues coordinate Zn(2+): Cys-350, Cys-353, Cys-366, Cys-369, Cys-374, Cys-377, Cys-402, and Cys-405.

Can form homooligomers (monomers, dimers and tetramers). Interacts with RAB11A (GDP-bound form); regulates RAB11A. Interacts with FKBP8; may negatively regulate ZFYVE27 phosphorylation. Interacts with VAPA (via MSP domain); may regulate ZFYVE27 retention in the endoplasmic reticulum and its function in cell projections formation. Interacts with VAPB (via MSP domain). Interacts with REEP1, REEP5 and ATL1. Interacts with ATL2, ATL3 and SPAST. Interacts with KIF5A and RTN3. Interacts with RAB11B (GDP-bound form), SURF4, KIF5B and KIF5C. In terms of processing, phosphorylated. Phosphorylation is induced by NGF through the MAPK/ERK pathway and modulates interaction with RAB11A.

Its subcellular location is the recycling endosome membrane. It localises to the endoplasmic reticulum membrane. It is found in the cell projection. The protein resides in the growth cone membrane. Its function is as follows. Key regulator of RAB11-dependent vesicular trafficking during neurite extension through polarized membrane transport. Promotes axonal elongation and contributes to the establishment of neuronal cell polarity. Involved in nerve growth factor-induced neurite formation in VAPA-dependent manner. Contributes to both the formation and stabilization of the tubular ER network. Involved in ER morphogenesis by regulating the sheet-to-tubule balance and possibly the density of tubule interconnections. Acts as an adapter protein and facilitates the interaction of KIF5A with VAPA, VAPB, SURF4, RAB11A, RAB11B and RTN3 and the ZFYVE27-KIF5A complex contributes to the transport of these proteins in neurons. Can induce formation of neurite-like membrane protrusions in non-neuronal cells in a KIF5A/B-dependent manner. This chain is Protrudin (ZFYVE27), found in Homo sapiens (Human).